Here is a 379-residue protein sequence, read N- to C-terminus: MLDHPLNSLGFAKPPAVTRVVVAMSGGVDSSVVAAELAAEGYDVVGVTLQLYDHGAALAKKGACCAGRDIHDARRVAETMGFPHYVLDYENTFREAVIDEFADAYLAGATPVPCIRCNERVKFKDLLQTAKDLDADCMATGHYIQRKMGPAGPELHSAADPARDQSYFLFSTTPEQLAFLRFPLGHLASKAETRALAARHGLPVADKPDSQDICFVPNGNYAEVIQKLRPGAADPGEIVDLSGRVLGEHRGVIHYTIGQRRGLGIGGLGDPLYVVRLDPERRQVIVGPKEALSTRIVPVREINWLGDAPLTSRSEWQVMAKVRSTRAPREAVIRPLSDTEAEVELIAPEDGVSPGQACVFYAPGDSRILGGGWIWRGAR.

ATP-binding positions include 23–30 (AMSGGVDS) and Leu49. The active-site Nucleophile is the Cys117. Residues Cys117 and Cys214 are joined by a disulfide bond. Gly141 contacts ATP. The tract at residues 163 to 165 (RDQ) is interaction with tRNA. Residue Cys214 is the Cysteine persulfide intermediate of the active site.

Belongs to the MnmA/TRMU family.

It is found in the cytoplasm. It carries out the reaction S-sulfanyl-L-cysteinyl-[protein] + uridine(34) in tRNA + AH2 + ATP = 2-thiouridine(34) in tRNA + L-cysteinyl-[protein] + A + AMP + diphosphate + H(+). Its function is as follows. Catalyzes the 2-thiolation of uridine at the wobble position (U34) of tRNA, leading to the formation of s(2)U34. This chain is tRNA-specific 2-thiouridylase MnmA, found in Cereibacter sphaeroides (strain ATCC 17023 / DSM 158 / JCM 6121 / CCUG 31486 / LMG 2827 / NBRC 12203 / NCIMB 8253 / ATH 2.4.1.) (Rhodobacter sphaeroides).